We begin with the raw amino-acid sequence, 232 residues long: Multiple organellar RNA editing factor 6, mitochondrial (232 aa).

The transit peptide at 1-67 (MAKTLSRSTA…TIRTRMDRSG (67 aa)) directs the protein to the mitochondrion. The tract at residues 208-232 (TNQRGSDKPKYHDRIRNVRRRENMR) is disordered. Residues 212–232 (GSDKPKYHDRIRNVRRRENMR) are compositionally biased toward basic and acidic residues.

It belongs to the MORF family. As to quaternary structure, heterodimers with MORF8/RIP1, MORF3/RIP3, MORF6/RIP6, MORF7/RIP7 and MORF9/RIP9.

The protein resides in the mitochondrion. In terms of biological role, involved in organellar RNA editing. Required for the processing of few RNA editing sites in mitochondria. The polypeptide is Multiple organellar RNA editing factor 6, mitochondrial (Arabidopsis thaliana (Mouse-ear cress)).